A 239-amino-acid chain; its full sequence is Small ribosomal subunit protein uS2 (239 aa).

The protein belongs to the universal ribosomal protein uS2 family.

The polypeptide is Small ribosomal subunit protein uS2 (Francisella tularensis subsp. novicida (strain U112)).